We begin with the raw amino-acid sequence, 209 residues long: Probable nicotinate-nucleotide adenylyltransferase (209 aa).

This sequence belongs to the NadD family.

The enzyme catalyses nicotinate beta-D-ribonucleotide + ATP + H(+) = deamido-NAD(+) + diphosphate. Its pathway is cofactor biosynthesis; NAD(+) biosynthesis; deamido-NAD(+) from nicotinate D-ribonucleotide: step 1/1. Functionally, catalyzes the reversible adenylation of nicotinate mononucleotide (NaMN) to nicotinic acid adenine dinucleotide (NaAD). This Idiomarina loihiensis (strain ATCC BAA-735 / DSM 15497 / L2-TR) protein is Probable nicotinate-nucleotide adenylyltransferase.